We begin with the raw amino-acid sequence, 273 residues long: MQEAQVRVAIAGANGRMGRQLIQAALAMDGVALGAALVREGSTLLGADAGELAGTGATGVTLKSNLEAVKDDFDVLIDFTRPEGTLAYLAFCRAHNKGMVIGTTGFDDAGKAAIHETATAIPVVFAANFSVGVNVMLKLLEKAAQVMGDYTDIEIIEAHHRHKVDAPSGTALAMGEAIAGALNKDLKSCAVYAREGYTGERVPGTIGFATVRAGDIVGEHTAMFADIGERIEITHKASSRMTFANGAVRAALWLKAQKKGFFDMRDVLNLNDL.

Residue 12 to 17 (GANGRM) participates in NAD(+) binding. R39 is a binding site for NADP(+). Residues 102 to 104 (GTT) and 126 to 129 (AANF) each bind NAD(+). Catalysis depends on H159, which acts as the Proton donor/acceptor. H160 is a binding site for (S)-2,3,4,5-tetrahydrodipicolinate. K163 serves as the catalytic Proton donor. 169–170 (GT) is a (S)-2,3,4,5-tetrahydrodipicolinate binding site.

The protein belongs to the DapB family. Homotetramer.

It is found in the cytoplasm. The enzyme catalyses (S)-2,3,4,5-tetrahydrodipicolinate + NAD(+) + H2O = (2S,4S)-4-hydroxy-2,3,4,5-tetrahydrodipicolinate + NADH + H(+). The catalysed reaction is (S)-2,3,4,5-tetrahydrodipicolinate + NADP(+) + H2O = (2S,4S)-4-hydroxy-2,3,4,5-tetrahydrodipicolinate + NADPH + H(+). It participates in amino-acid biosynthesis; L-lysine biosynthesis via DAP pathway; (S)-tetrahydrodipicolinate from L-aspartate: step 4/4. Catalyzes the conversion of 4-hydroxy-tetrahydrodipicolinate (HTPA) to tetrahydrodipicolinate. The sequence is that of 4-hydroxy-tetrahydrodipicolinate reductase from Cronobacter sakazakii (strain ATCC BAA-894) (Enterobacter sakazakii).